The following is a 92-amino-acid chain: DNA-directed RNA polymerase subunit omega (92 aa).

This sequence belongs to the RNA polymerase subunit omega family. As to quaternary structure, the RNAP catalytic core consists of 2 alpha, 1 beta, 1 beta' and 1 omega subunit. When a sigma factor is associated with the core the holoenzyme is formed, which can initiate transcription.

The catalysed reaction is RNA(n) + a ribonucleoside 5'-triphosphate = RNA(n+1) + diphosphate. Its function is as follows. Promotes RNA polymerase assembly. Latches the N- and C-terminal regions of the beta' subunit thereby facilitating its interaction with the beta and alpha subunits. The polypeptide is DNA-directed RNA polymerase subunit omega (Shewanella denitrificans (strain OS217 / ATCC BAA-1090 / DSM 15013)).